The sequence spans 918 residues: Calcium-transporting ATPase type 2C member 1 (918 aa).

Over 1 to 78 (MKVARFQKIP…EPLWKKYISQ (78 aa)) the chain is Cytoplasmic. The helical transmembrane segment at 79-95 (FKNPLIMLLLASAVISI) threads the bilayer. Residues 96-99 (LMRQ) are Extracellular-facing. A helical transmembrane segment spans residues 100 to 121 (FDDAVSITVAIVIVVTVAFVQE). Residues 122-262 (YRSEKSLEEL…PKTPLQKSMD (141 aa)) lie on the Cytoplasmic side of the membrane. Residues 263-282 (LLGKQLSFYSFGIIGIIMLV) traverse the membrane as a helical segment. The Extracellular portion of the chain corresponds to 283-294 (GWLLGKDILEMF). The helical transmembrane segment at 295–316 (TISVSLAVAAIPEGLPIVVTVT) threads the bilayer. At 317-699 (LALGVMRMVK…EGKGIYNNIK (383 aa)) the chain is on the cytoplasmic side. Residue Asp-349 is the 4-aspartylphosphate intermediate of the active site. Residues Asp-643 and Asp-647 each coordinate Mg(2+). Residues 700 to 722 (NFVRFQLSTSIAALTLISLATLM) form a helical membrane-spanning segment. Residues 723–727 (NFPNP) lie on the Extracellular side of the membrane. A helical transmembrane segment spans residues 728–751 (LNAMQILWINIIMDGPPAQSLGVE). At 752–775 (PVDKDVIRKPPRNWKDSILTKNLI) the chain is on the cytoplasmic side. A helical membrane pass occupies residues 776-794 (LKILVSSIIIVCGTLFVFW). The Extracellular portion of the chain corresponds to 795-801 (RELRDNV). A helical transmembrane segment spans residues 802 to 827 (ITPRDTTMTFTCFVFFDMFNALSSRS). Residues 828–842 (QTKSVFEIGLCSNKM) are Cytoplasmic-facing. A helical transmembrane segment spans residues 843 to 862 (FCYAVLGSIMGQLLVIYFPP). Over 863–875 (LQKVFQTESLSIL) the chain is Extracellular. A helical transmembrane segment spans residues 876–892 (DLLFLLGLTSSVCIVSE). At 893–918 (IIKKVERSREKVQKNAGSASSSFLEV) the chain is on the cytoplasmic side.

It belongs to the cation transport ATPase (P-type) (TC 3.A.3) family. Type IIA subfamily. Monomer. Homodimer. As to expression, expressed in hippocampal neurons in the CA3 region of the Amon's horn (at protein level). Expressed in brain, heart, lung, stomach, liver, colon and mammary gland.

It is found in the golgi apparatus. The protein resides in the trans-Golgi network membrane. The protein localises to the golgi stack membrane. It carries out the reaction Ca(2+)(in) + ATP + H2O = Ca(2+)(out) + ADP + phosphate + H(+). The enzyme catalyses Mn(2+)(in) + ATP + H2O = Mn(2+)(out) + ADP + phosphate + H(+). ATP-driven pump that supplies the Golgi apparatus with Ca(2+) and Mn(2+) ions, both essential cofactors for processing and trafficking of newly synthesized proteins in the secretory pathway. Within a catalytic cycle, acquires Ca(2+) or Mn(2+) ions on the cytoplasmic side of the membrane and delivers them to the lumenal side. The transfer of ions across the membrane is coupled to ATP hydrolysis and is associated with a transient phosphorylation that shifts the pump conformation from inward-facing to outward-facing state. Plays a primary role in the maintenance of Ca(2+) homeostasis in the trans-Golgi compartment with a functional impact on Golgi and post-Golgi protein sorting as well as a structural impact on cisternae morphology. Responsible for loading the Golgi stores with Ca(2+) ions in keratinocytes, contributing to keratinocyte differentiation and epidermis integrity. Participates in Ca(2+) and Mn(2+) ions uptake into the Golgi store of hippocampal neurons and regulates protein trafficking required for neural polarity. May also play a role in the maintenance of Ca(2+) and Mn(2+) homeostasis and signaling in the cytosol while preventing cytotoxicity. The sequence is that of Calcium-transporting ATPase type 2C member 1 from Mus musculus (Mouse).